The sequence spans 1414 residues: DNA-directed RNA polymerase subunit beta' (1414 aa).

Residues C70, C72, C85, and C88 each contribute to the Zn(2+) site. 3 residues coordinate Mg(2+): D460, D462, and D464. 4 residues coordinate Zn(2+): C815, C889, C896, and C899. Positions E1395–S1414 are disordered.

Belongs to the RNA polymerase beta' chain family. In terms of assembly, the RNAP catalytic core consists of 2 alpha, 1 beta, 1 beta' and 1 omega subunit. When a sigma factor is associated with the core the holoenzyme is formed, which can initiate transcription. It depends on Mg(2+) as a cofactor. Zn(2+) is required as a cofactor.

It carries out the reaction RNA(n) + a ribonucleoside 5'-triphosphate = RNA(n+1) + diphosphate. In terms of biological role, DNA-dependent RNA polymerase catalyzes the transcription of DNA into RNA using the four ribonucleoside triphosphates as substrates. The protein is DNA-directed RNA polymerase subunit beta' of Herminiimonas arsenicoxydans.